Consider the following 925-residue polypeptide: Serine/threonine-protein kinase SIK2 (925 aa).

Residues 20–271 (YDIEGTLGKG…IAQIKEHKWM (252 aa)) enclose the Protein kinase domain. Residue Thr-25 is modified to Phosphothreonine. ATP contacts are provided by residues 26 to 34 (LGKGNFAVV) and Lys-49. Lys-53 carries the post-translational modification N6-acetyllysine; by EP300. Catalysis depends on Asp-142, which acts as the Proton acceptor. Thr-175 is subject to Phosphothreonine. Positions 295–335 (EFNEQVLRLMHSLGIDQQKTIESLQNKSYNHFAAIYFLLVE) constitute a UBA domain. Ser-534 bears the Phosphoserine mark. Residues 564 to 586 (ALSSQKREVHNRSPVSFREGRRA) are disordered. Ser-587 is modified (phosphoserine). Disordered regions lie at residues 630–674 (PNLA…PRQS), 742–776 (SSYPQPSQQLPLPRQETPPPSQQAPPFSLTQPLSP), and 800–895 (QPLP…SSYD). Composition is skewed to low complexity over residues 648 to 659 (QEEVSQQQESVS) and 742 to 756 (SSYPQPSQQLPLPRQ). A compositionally biased stretch (polar residues) spans 765–774 (APPFSLTQPL). A compositionally biased stretch (low complexity) spans 808 to 820 (PRAAPLPTQLQQQ). Positions 821-833 (QPPPPPPPPPPRQ) are enriched in pro residues.

Belongs to the protein kinase superfamily. CAMK Ser/Thr protein kinase family. SNF1 subfamily. In terms of assembly, interacts with and phosphorylates TORC2/CRTC2. The cofactor is Mg(2+). Post-translationally, phosphorylated at Thr-175 by STK11/LKB1 in complex with STE20-related adapter-alpha (STRADA) pseudo kinase and CAB39. Phosphorylated at Thr-484 in response to insulin in adipocytes. In terms of processing, acetylation at Lys-53 inhibits kinase activity. Deacetylated by HDAC6.

It is found in the cytoplasm. Its subcellular location is the endoplasmic reticulum membrane. The enzyme catalyses L-seryl-[protein] + ATP = O-phospho-L-seryl-[protein] + ADP + H(+). It carries out the reaction L-threonyl-[protein] + ATP = O-phospho-L-threonyl-[protein] + ADP + H(+). Its activity is regulated as follows. Activated by phosphorylation on Thr-175. In terms of biological role, serine/threonine-protein kinase that plays a role in many biological processes such as fatty acid oxidation, autophagy, immune response or glucose metabolism. Phosphorylates 'Ser-794' of IRS1 in insulin-stimulated adipocytes, potentially modulating the efficiency of insulin signal transduction. Inhibits CREB activity by phosphorylating and repressing TORCs, the CREB-specific coactivators. Phosphorylates EP300 and thus inhibits its histone acetyltransferase activity. In turn, regulates the DNA-binding ability of several transcription factors such as PPARA or MLXIPL. Also plays a role in thymic T-cell development. The sequence is that of Serine/threonine-protein kinase SIK2 (SIK2) from Pongo abelii (Sumatran orangutan).